A 397-amino-acid chain; its full sequence is Staphyloferrin A transporter (397 aa).

A run of 12 helical transmembrane segments spans residues 10–30 (FLLFLGNWIGQIGLNWFVLTT), 39–59 (IVNFCRLVPILLLSVWAGAIA), 67–87 (LLRITISSSFLVTAILCVLTY), 93–110 (PISVIIIYATLRGILSAV), 137–157 (FIINICRSIGPAIAGVILAVY), 162–182 (TFLAQAICYFIAVLLCLPLHF), 213–233 (IFITSLLIMATGFSYTTLLPV), 245–265 (IFGIAMTMCAIGGIIATLVLP), 271–292 (IGMVNMYYLSSFLFGIALLGVV), 296–313 (IVIMFICITLIGLFSQWA), 333–353 (VLSIIMMDRGMIPLGSLLMSI), and 358–378 (FGIVRTFSIMGISTICITMVF).

The protein belongs to the major facilitator superfamily.

The protein localises to the cell membrane. In terms of biological role, involved in staphyloferrin A secretion. This is Staphyloferrin A transporter from Staphylococcus aureus (strain NCTC 8325 / PS 47).